The chain runs to 71 residues: Protein CYSTEINE-RICH TRANSMEMBRANE MODULE 4 (71 aa).

Polar residues predominate over residues 1-12 (MSQYSQNQSSGA). Residues 1 to 31 (MSQYSQNQSSGAYPTPPVSTGPYMTPPPLGY) are disordered. A compositionally biased stretch (pro residues) spans 14–30 (PTPPVSTGPYMTPPPLG). Residues 48-64 (SKGDGFLKGCLAAMCCC) form a helical membrane-spanning segment.

The protein belongs to the CYSTM1 family. Heterodimers. Interacts with CYSTM6, CYSTM7, CYSTM12 and WIH1/CYSTM13. In terms of tissue distribution, mostly expressed in roots, stems, rosette leaves and siliques and, to a lower extent, in flowers and cauline leaves.

The protein localises to the cell membrane. Its subcellular location is the cytoplasm. Involved in resistance to abiotic stress. The protein is Protein CYSTEINE-RICH TRANSMEMBRANE MODULE 4 of Arabidopsis thaliana (Mouse-ear cress).